A 295-amino-acid chain; its full sequence is Protoheme IX farnesyltransferase (295 aa).

9 helical membrane passes run 9 to 29 (ITKP…FFLA), 36 to 56 (FGVF…GCVF), 80 to 100 (LVSL…GVGL), 108 to 128 (LAAL…SLYL), 135 to 155 (GTLV…CAVS), 163 to 183 (LTLL…IAIF), 209 to 229 (IMLY…GGYA), 230 to 250 (GLNY…MAWK), and 265 to 285 (FVFS…DFQV).

Belongs to the UbiA prenyltransferase family. Protoheme IX farnesyltransferase subfamily.

It localises to the cell inner membrane. The enzyme catalyses heme b + (2E,6E)-farnesyl diphosphate + H2O = Fe(II)-heme o + diphosphate. It functions in the pathway porphyrin-containing compound metabolism; heme O biosynthesis; heme O from protoheme: step 1/1. Its function is as follows. Converts heme B (protoheme IX) to heme O by substitution of the vinyl group on carbon 2 of heme B porphyrin ring with a hydroxyethyl farnesyl side group. This Pseudomonas syringae pv. syringae (strain B728a) protein is Protoheme IX farnesyltransferase.